A 227-amino-acid chain; its full sequence is Phosphoglycolate phosphatase (227 aa).

D11 acts as the Nucleophile in catalysis. Mg(2+) is bound by residues D11 and D13. Residue K155 coordinates substrate. The Mg(2+) site is built by D178 and D182.

It belongs to the archaeal SPP-like hydrolase family. Requires Mg(2+) as cofactor.

It carries out the reaction 2-phosphoglycolate + H2O = glycolate + phosphate. Functionally, catalyzes the dephosphorylation of 2-phosphoglycolate. In Haloarcula marismortui (strain ATCC 43049 / DSM 3752 / JCM 8966 / VKM B-1809) (Halobacterium marismortui), this protein is Phosphoglycolate phosphatase.